Consider the following 144-residue polypeptide: Ribosomal RNA large subunit methyltransferase H (144 aa).

S-adenosyl-L-methionine-binding positions include leucine 63, glycine 92, and leucine 111–phenylalanine 116.

Belongs to the RNA methyltransferase RlmH family. In terms of assembly, homodimer.

The protein localises to the cytoplasm. It carries out the reaction pseudouridine(1915) in 23S rRNA + S-adenosyl-L-methionine = N(3)-methylpseudouridine(1915) in 23S rRNA + S-adenosyl-L-homocysteine + H(+). Its function is as follows. Specifically methylates the pseudouridine at position 1915 (m3Psi1915) in 23S rRNA. This Parasynechococcus marenigrum (strain WH8102) protein is Ribosomal RNA large subunit methyltransferase H.